Reading from the N-terminus, the 435-residue chain is Serine hydroxymethyltransferase (435 aa).

(6S)-5,6,7,8-tetrahydrofolate is bound by residues leucine 133 and 137–139 (GHL). At lysine 242 the chain carries N6-(pyridoxal phosphate)lysine.

It belongs to the SHMT family. Homodimer. Pyridoxal 5'-phosphate serves as cofactor.

The protein resides in the cytoplasm. The enzyme catalyses (6R)-5,10-methylene-5,6,7,8-tetrahydrofolate + glycine + H2O = (6S)-5,6,7,8-tetrahydrofolate + L-serine. It functions in the pathway one-carbon metabolism; tetrahydrofolate interconversion. The protein operates within amino-acid biosynthesis; glycine biosynthesis; glycine from L-serine: step 1/1. Functionally, catalyzes the reversible interconversion of serine and glycine with tetrahydrofolate (THF) serving as the one-carbon carrier. This reaction serves as the major source of one-carbon groups required for the biosynthesis of purines, thymidylate, methionine, and other important biomolecules. Also exhibits THF-independent aldolase activity toward beta-hydroxyamino acids, producing glycine and aldehydes, via a retro-aldol mechanism. The sequence is that of Serine hydroxymethyltransferase from Hyphomonas neptunium (strain ATCC 15444).